The primary structure comprises 255 residues: Diphthine synthase (255 aa).

S-adenosyl-L-methionine is bound by residues Leu9, Asp85, Val88, 113–114 (SI), Leu164, Ala207, and His232.

It belongs to the diphthine synthase family. Homodimer.

The catalysed reaction is 2-[(3S)-amino-3-carboxypropyl]-L-histidyl-[translation elongation factor 2] + 3 S-adenosyl-L-methionine = diphthine-[translation elongation factor 2] + 3 S-adenosyl-L-homocysteine + 3 H(+). The protein operates within protein modification; peptidyl-diphthamide biosynthesis. S-adenosyl-L-methionine-dependent methyltransferase that catalyzes the trimethylation of the amino group of the modified target histidine residue in translation elongation factor 2 (EF-2), to form an intermediate called diphthine. The three successive methylation reactions represent the second step of diphthamide biosynthesis. In Methanococcus vannielii (strain ATCC 35089 / DSM 1224 / JCM 13029 / OCM 148 / SB), this protein is Diphthine synthase.